We begin with the raw amino-acid sequence, 227 residues long: Cytochrome c oxidase subunit 2 (227 aa).

The Mitochondrial intermembrane portion of the chain corresponds to 1 to 14; sequence MAHAAQVGLQDATS. Residues 15 to 45 form a helical membrane-spanning segment; that stretch reads PIMEELIIFHDHALMIIFLICFLVLYALFLT. At 46–59 the chain is on the mitochondrial matrix side; sequence LTTKLTNTSISDAQ. The helical transmembrane segment at 60-87 threads the bilayer; the sequence is EMETVWTILPAIILVLIALPSLRILYMT. At 88–227 the chain is on the mitochondrial intermembrane side; it reads DEVNDPSFTI…IFEMGPVFTL (140 aa). Residues H161, C196, E198, C200, H204, and M207 each contribute to the Cu cation site. E198 serves as a coordination point for Mg(2+).

The protein belongs to the cytochrome c oxidase subunit 2 family. Component of the cytochrome c oxidase (complex IV, CIV), a multisubunit enzyme composed of 14 subunits. The complex is composed of a catalytic core of 3 subunits MT-CO1, MT-CO2 and MT-CO3, encoded in the mitochondrial DNA, and 11 supernumerary subunits COX4I, COX5A, COX5B, COX6A, COX6B, COX6C, COX7A, COX7B, COX7C, COX8 and NDUFA4, which are encoded in the nuclear genome. The complex exists as a monomer or a dimer and forms supercomplexes (SCs) in the inner mitochondrial membrane with NADH-ubiquinone oxidoreductase (complex I, CI) and ubiquinol-cytochrome c oxidoreductase (cytochrome b-c1 complex, complex III, CIII), resulting in different assemblies (supercomplex SCI(1)III(2)IV(1) and megacomplex MCI(2)III(2)IV(2)). Found in a complex with TMEM177, COA6, COX18, COX20, SCO1 and SCO2. Interacts with TMEM177 in a COX20-dependent manner. Interacts with COX20. Interacts with COX16. The cofactor is Cu cation.

Its subcellular location is the mitochondrion inner membrane. It carries out the reaction 4 Fe(II)-[cytochrome c] + O2 + 8 H(+)(in) = 4 Fe(III)-[cytochrome c] + 2 H2O + 4 H(+)(out). Component of the cytochrome c oxidase, the last enzyme in the mitochondrial electron transport chain which drives oxidative phosphorylation. The respiratory chain contains 3 multisubunit complexes succinate dehydrogenase (complex II, CII), ubiquinol-cytochrome c oxidoreductase (cytochrome b-c1 complex, complex III, CIII) and cytochrome c oxidase (complex IV, CIV), that cooperate to transfer electrons derived from NADH and succinate to molecular oxygen, creating an electrochemical gradient over the inner membrane that drives transmembrane transport and the ATP synthase. Cytochrome c oxidase is the component of the respiratory chain that catalyzes the reduction of oxygen to water. Electrons originating from reduced cytochrome c in the intermembrane space (IMS) are transferred via the dinuclear copper A center (CU(A)) of subunit 2 and heme A of subunit 1 to the active site in subunit 1, a binuclear center (BNC) formed by heme A3 and copper B (CU(B)). The BNC reduces molecular oxygen to 2 water molecules using 4 electrons from cytochrome c in the IMS and 4 protons from the mitochondrial matrix. In Pan troglodytes (Chimpanzee), this protein is Cytochrome c oxidase subunit 2 (MT-CO2).